A 509-amino-acid chain; its full sequence is Lysine--tRNA ligase (509 aa).

The Mg(2+) site is built by glutamate 419 and glutamate 426.

The protein belongs to the class-II aminoacyl-tRNA synthetase family. In terms of assembly, homodimer. Mg(2+) is required as a cofactor.

The protein localises to the cytoplasm. The catalysed reaction is tRNA(Lys) + L-lysine + ATP = L-lysyl-tRNA(Lys) + AMP + diphosphate. This chain is Lysine--tRNA ligase, found in Methylobacillus flagellatus (strain ATCC 51484 / DSM 6875 / VKM B-1610 / KT).